We begin with the raw amino-acid sequence, 279 residues long: Energy-coupling factor transporter ATP-binding protein EcfA1 (279 aa).

An ABC transporter domain is found at 5–240 (IELKKVTFNY…GDELLQLGLD (236 aa)). 40 to 47 (GHNGSGKS) lines the ATP pocket.

This sequence belongs to the ABC transporter superfamily. Energy-coupling factor EcfA family. As to quaternary structure, forms a stable energy-coupling factor (ECF) transporter complex composed of 2 membrane-embedded substrate-binding proteins (S component), 2 ATP-binding proteins (A component) and 2 transmembrane proteins (T component).

It localises to the cell membrane. Functionally, ATP-binding (A) component of a common energy-coupling factor (ECF) ABC-transporter complex. Unlike classic ABC transporters this ECF transporter provides the energy necessary to transport a number of different substrates. This chain is Energy-coupling factor transporter ATP-binding protein EcfA1, found in Streptococcus pyogenes serotype M28 (strain MGAS6180).